The chain runs to 292 residues: Phosphatidylglycerol--prolipoprotein diacylglyceryl transferase (292 aa).

7 helical membrane-spanning segments follow: residues 21-41, 60-80, 98-118, 124-144, 198-218, 225-245, and 258-278; these read VSLHWYGLMYLVGFVFAMWLA, LLYAGFLGVFLGGRIGYVLFY, GGMSFHGGLIGVIVVMLVFAH, FFQVADFIAPLIPFGLGAGRL, SQLYELILEGVVLFIILNLFI, GAVSGLFLIGYGAFRIIVEFF, and ISMGQILSLPMILAGVIMMIW. Residue Arg143 coordinates a 1,2-diacyl-sn-glycero-3-phospho-(1'-sn-glycerol).

It belongs to the Lgt family.

Its subcellular location is the cell inner membrane. The enzyme catalyses L-cysteinyl-[prolipoprotein] + a 1,2-diacyl-sn-glycero-3-phospho-(1'-sn-glycerol) = an S-1,2-diacyl-sn-glyceryl-L-cysteinyl-[prolipoprotein] + sn-glycerol 1-phosphate + H(+). Its pathway is protein modification; lipoprotein biosynthesis (diacylglyceryl transfer). Functionally, catalyzes the transfer of the diacylglyceryl group from phosphatidylglycerol to the sulfhydryl group of the N-terminal cysteine of a prolipoprotein, the first step in the formation of mature lipoproteins. The chain is Phosphatidylglycerol--prolipoprotein diacylglyceryl transferase from Erwinia tasmaniensis (strain DSM 17950 / CFBP 7177 / CIP 109463 / NCPPB 4357 / Et1/99).